Reading from the N-terminus, the 252-residue chain is Short-chain dehydrogenase anuI (252 aa).

Residues Leu-18, Asp-65, Asn-92, Tyr-171, Lys-175, and Thr-206 each coordinate NADP(+). The active-site Proton acceptor is Tyr-171. Tyr-171 functions as the Proton donor in the catalytic mechanism. Catalysis depends on Lys-175, which acts as the Lowers pKa of active site Tyr.

Belongs to the short-chain dehydrogenases/reductases (SDR) family.

Its function is as follows. Highly reducing polyketide synthase; part of the gene cluster that mediates the biosynthesis of annullatin D, an alkylated aromatic polyketide with a fused dihydrobenzofuran lactone ring system that exhibits potent agonistic activities toward the cannabinoid receptors. AnuI does not seem to play a role within the pathway. The annullatin backbone 2-hydroxymethyl-3-pentylphenol is assembled from one acetyl-CoA starter unit and 5 malonyl-CoA elongation units by cooperation of the highly reducing polyketide synthase anuA, the short-chain dehydrogenase anuB and the oxidoreductase anuC, before being hydroxylated at the C-5 alkyl chain by the cytochrome P450 monooxygenase anuE to form (8S)-annullatin E. The prenyltransferase anuH subsequently installs one isoprenyl group at the benzene ring to form (8S)-annullatin J. Enzymatic or nonenzymatic dihydro-benzofuran ring formation between the prenyl and the phenolic hydroxyl groups in (8S)-annullatin J results in two diastereomers (2S,9S)-annullatin H and compound 12. The intermediate (2S,9S)-annullatin H is then converted to (2S,9S)-annullatin D by the FAD-linked oxidoreductase anuG-catalyzed five-member lactone ring formation. The isomer 12 acts as a substrate for the short-chain dehydrogenase anuF and is oxidized to (2R)-annullatin F, which is subsequently acetylated by an acetyltransferase leading to (2R)-annullatin G formation. The remaining enzymes identified within the cluster, anuD, anuI and anuJ, seem not to be involved in annullatin biosynthesis. This is Short-chain dehydrogenase anuI from Penicillium roqueforti (strain FM164).